The chain runs to 308 residues: D-alanine--D-alanine ligase (308 aa).

An ATP-grasp domain is found at 104 to 301; sequence KQIWQGSDLP…FDELCVAILE (198 aa). 130-185 is a binding site for ATP; it reads IAELGLPVIIKPVHEGSSVGMSKVEKAEDFAAAIEKATQHDAVVMAEKWITGREFT. Residues aspartate 255, glutamate 268, and asparagine 270 each contribute to the Mg(2+) site.

Belongs to the D-alanine--D-alanine ligase family. The cofactor is Mg(2+). Mn(2+) serves as cofactor.

It localises to the cytoplasm. It carries out the reaction 2 D-alanine + ATP = D-alanyl-D-alanine + ADP + phosphate + H(+). It functions in the pathway cell wall biogenesis; peptidoglycan biosynthesis. Its function is as follows. Cell wall formation. The polypeptide is D-alanine--D-alanine ligase (Acinetobacter baumannii (strain SDF)).